The sequence spans 222 residues: ATP synthase F(0) complex subunit a (222 aa).

Helical transmembrane passes span 7-27, 64-84, 93-113, 132-152, 160-180, and 185-205; these read AFFD…AILL, WSLM…LGLL, QLTV…ILGF, FLIP…PVTL, ITAG…LLSI, and ITVT…VALI.

The protein belongs to the ATPase A chain family. Component of the ATP synthase complex composed at least of ATP5F1A/subunit alpha, ATP5F1B/subunit beta, ATP5MC1/subunit c (homooctomer), MT-ATP6/subunit a, MT-ATP8/subunit 8, ATP5ME/subunit e, ATP5MF/subunit f, ATP5MG/subunit g, ATP5MK/subunit k, ATP5MJ/subunit j, ATP5F1C/subunit gamma, ATP5F1D/subunit delta, ATP5F1E/subunit epsilon, ATP5PF/subunit F6, ATP5PB/subunit b, ATP5PD/subunit d, ATP5PO/subunit OSCP. ATP synthase complex consists of a soluble F(1) head domain (subunits alpha(3) and beta(3)) - the catalytic core - and a membrane F(0) domain - the membrane proton channel (subunits c, a, 8, e, f, g, k and j). These two domains are linked by a central stalk (subunits gamma, delta, and epsilon) rotating inside the F1 region and a stationary peripheral stalk (subunits F6, b, d, and OSCP). Interacts with DNAJC30; interaction is direct.

Its subcellular location is the mitochondrion inner membrane. The enzyme catalyses H(+)(in) = H(+)(out). Its function is as follows. Subunit a, of the mitochondrial membrane ATP synthase complex (F(1)F(0) ATP synthase or Complex V) that produces ATP from ADP in the presence of a proton gradient across the membrane which is generated by electron transport complexes of the respiratory chain. ATP synthase complex consist of a soluble F(1) head domain - the catalytic core - and a membrane F(1) domain - the membrane proton channel. These two domains are linked by a central stalk rotating inside the F(1) region and a stationary peripheral stalk. During catalysis, ATP synthesis in the catalytic domain of F(1) is coupled via a rotary mechanism of the central stalk subunits to proton translocation. With the subunit c (ATP5MC1), forms the proton-conducting channel in the F(0) domain, that contains two crucial half-channels (inlet and outlet) that facilitate proton movement from the mitochondrial intermembrane space (IMS) into the matrix. Protons are taken up via the inlet half-channel and released through the outlet half-channel, following a Grotthuss mechanism. The chain is ATP synthase F(0) complex subunit a from Mammuthus primigenius (Siberian woolly mammoth).